A 184-amino-acid chain; its full sequence is Transcription termination/antitermination protein NusG (184 aa).

This sequence belongs to the NusG family.

Participates in transcription elongation, termination and antitermination. In Borreliella burgdorferi (strain ATCC 35210 / DSM 4680 / CIP 102532 / B31) (Borrelia burgdorferi), this protein is Transcription termination/antitermination protein NusG.